The following is a 222-amino-acid chain: Large ribosomal subunit protein uL1 (222 aa).

It belongs to the universal ribosomal protein uL1 family. In terms of assembly, part of the 50S ribosomal subunit.

Its function is as follows. Binds directly to 23S rRNA. Probably involved in E site tRNA release. Functionally, protein L1 is also a translational repressor protein, it controls the translation of its operon by binding to its mRNA. The chain is Large ribosomal subunit protein uL1 from Pyrobaculum neutrophilum (strain DSM 2338 / JCM 9278 / NBRC 100436 / V24Sta) (Thermoproteus neutrophilus).